Reading from the N-terminus, the 234-residue chain is MFNSQAAVASKIIVALDVPNLEVAIATIHRLPQVQFWKVGLELFCASGPMILDVLKDQGKRIFLDLKLHDIPNTVAAAARAIAPYGVDFVTIHTATGLTGLKTAQAALGESATQLIGVTLLTSIGADTLQQELQIPLDPATYVECMANLAHQAGLAGIVCSPQEAARVKQRWGENFLRICPGIRPLGSATGDQARSLTPNAAFAAGASYLVIGRPILQAADPAAAFDDLCSSLV.

Substrate-binding positions include D17, K38, 65–74 (DLKLHDIPNT), T122, R184, Q193, G213, and R214. The Proton donor role is filled by K67.

This sequence belongs to the OMP decarboxylase family. Type 1 subfamily. Homodimer.

The catalysed reaction is orotidine 5'-phosphate + H(+) = UMP + CO2. The protein operates within pyrimidine metabolism; UMP biosynthesis via de novo pathway; UMP from orotate: step 2/2. In terms of biological role, catalyzes the decarboxylation of orotidine 5'-monophosphate (OMP) to uridine 5'-monophosphate (UMP). This is Orotidine 5'-phosphate decarboxylase from Thermosynechococcus vestitus (strain NIES-2133 / IAM M-273 / BP-1).